We begin with the raw amino-acid sequence, 892 residues long: MTQYTPMIQQYLKVKADYQDAFLFFRLGDFYEMFFEDAVKAAHELEITLTSRDGGSSERIPMCGVPYHAAKNYIEQLVEKGYKVAVCEQVEDPKTAKGVVRREVVQLITPGTMMEGRTIDEKENNFLAALTHFEDGSYALACNDLTTGQNTVTLLTGSVEDILLEVYATGSKEIVVDSSFSKDELNKLTETLKMTISYEDATAIPEGLEHLVKNVSQAKLIKAVGRLFNYVIRTQKRSLDHLQPVEIYYTNQFMKIDVHSKRNLELTETLRTKEKTGSLLWLLDKTKTAMGGRMLKQWMERPLIQKERIEERLEMVETFVNDYFLREDLKEKLKEVYDLERLAGKVAFGNVNARDLLQLRRSLLQVPAILEAISLLDNAYAARLIQGADPCESLTELLGRSIQENPPLSIKDGDIIKDGYNDKLDQYRYVSKNGKTWIAELEKRERDITGIKSLKIGYNRIFGYYIEVTKANLGALPEGRYERKQTLANAERFITDELKEKETLILEAEEKIVQLEYDLFTALREEVKVFIPKLQHLAKVISELDVLQSFATVSEEEQFVKPVLTTKREIFIKDGRHPVVEKVLNGKLYVPNDCIMPENMDVFLITGPNMSGKSTYMRQLALVTVMSQIGCFVPATEAVLPVFDQIFTRIGAADDLISGQSTFMVEMLEAKNAIANASERSLILFDEIGRGTSTYDGMALAQAIIEHIHDQIGAKTLFSTHYHELTVLEDSLDQLKNVHVSAIEENGKVVFLHKIQDGAADKSYGIHVAQLAELPDSLIARAKEVLAQLEGQEEIVIPKRVEVKAQEQEVIPEPIVVKEEPIEIEETKVDNEEESQLSFFGAEQSSKKQDKPALDAKETAVLTQIKKIDLLDMTPLEAMNELYRLQKKLKKG.

607–614 (GPNMSGKS) serves as a coordination point for ATP. A disordered region spans residues 833-855 (EESQLSFFGAEQSSKKQDKPALD). Positions 845–855 (SSKKQDKPALD) are enriched in basic and acidic residues.

This sequence belongs to the DNA mismatch repair MutS family.

Functionally, this protein is involved in the repair of mismatches in DNA. It is possible that it carries out the mismatch recognition step. This protein has a weak ATPase activity. The chain is DNA mismatch repair protein MutS from Bacillus anthracis (strain A0248).